The chain runs to 1032 residues: Probable LRR receptor-like serine/threonine-protein kinase At1g56130 (1032 aa).

Positions 1-29 are cleaved as a signal peptide; that stretch reads MTRIRRSPCLLLLIIWFMCIAGSVQVVQS. Over 30–636 the chain is Extracellular; the sequence is QNQTGATTHP…PPSKGKNRTG (607 aa). N-linked (GlcNAc...) asparagine glycans are attached at residues Asn-31, Asn-61, and Asn-95. 10 LRR repeats span residues 101–122, 123–146, 148–170, 171–194, 196–217, 242–265, 290–314, 315–338, 340–360, and 361–385; these read ITNI…LWTL, TYLT…IGNL, RMQW…IGLL, TDLR…IGRC, KLQQ…SFAN, WTKL…SFSN, MKSL…IGEH, SSLR…LFNL, QLTH…TQKT, and QSLR…SLPS. Asn-145 is a glycosylation site (N-linked (GlcNAc...) asparagine). Asn-182 is a glycosylation site (N-linked (GlcNAc...) asparagine). 5 N-linked (GlcNAc...) asparagine glycosylation sites follow: Asn-265, Asn-302, Asn-337, Asn-348, and Asn-352. 3 N-linked (GlcNAc...) asparagine glycosylation sites follow: Asn-394, Asn-580, and Asn-633. A helical transmembrane segment spans residues 637-657; it reads TIVGVIVGVGLLSILAGVVMF. The Cytoplasmic segment spans residues 658-1032; sequence TIRKRRKRYT…MLGSKINEGR (375 aa). Thr-683 is modified (phosphothreonine). Residues 694–968 form the Protein kinase domain; the sequence is FDPSNKLGEG…VAMLSGDVEI (275 aa). ATP is bound by residues 700-708 and Lys-722; that span reads LGEGGFGPV. The residue at position 767 (Tyr-767) is a Phosphotyrosine. Asp-818 serves as the catalytic Proton acceptor. Phosphoserine is present on residues Ser-822 and Ser-851. Phosphothreonine occurs at positions 852 and 857. Tyr-865 is subject to Phosphotyrosine. The interval 1008 to 1032 is disordered; the sequence is APGSEISPRDSDFKPMLGSKINEGR.

Belongs to the protein kinase superfamily. Ser/Thr protein kinase family.

It is found in the cell membrane. It carries out the reaction L-seryl-[protein] + ATP = O-phospho-L-seryl-[protein] + ADP + H(+). The enzyme catalyses L-threonyl-[protein] + ATP = O-phospho-L-threonyl-[protein] + ADP + H(+). This is Probable LRR receptor-like serine/threonine-protein kinase At1g56130 from Arabidopsis thaliana (Mouse-ear cress).